The following is a 482-amino-acid chain: UDP-N-acetylmuramate--L-alanine ligase (482 aa).

Residue 123–129 participates in ATP binding; the sequence is GTHGKTT.

It belongs to the MurCDEF family.

Its subcellular location is the cytoplasm. The enzyme catalyses UDP-N-acetyl-alpha-D-muramate + L-alanine + ATP = UDP-N-acetyl-alpha-D-muramoyl-L-alanine + ADP + phosphate + H(+). It functions in the pathway cell wall biogenesis; peptidoglycan biosynthesis. Functionally, cell wall formation. The sequence is that of UDP-N-acetylmuramate--L-alanine ligase from Pseudomonas entomophila (strain L48).